A 277-amino-acid chain; its full sequence is 2-dehydro-3-deoxyphosphooctonate aldolase (277 aa).

The protein belongs to the KdsA family.

It is found in the cytoplasm. The catalysed reaction is D-arabinose 5-phosphate + phosphoenolpyruvate + H2O = 3-deoxy-alpha-D-manno-2-octulosonate-8-phosphate + phosphate. Its pathway is carbohydrate biosynthesis; 3-deoxy-D-manno-octulosonate biosynthesis; 3-deoxy-D-manno-octulosonate from D-ribulose 5-phosphate: step 2/3. The protein operates within bacterial outer membrane biogenesis; lipopolysaccharide biosynthesis. This chain is 2-dehydro-3-deoxyphosphooctonate aldolase, found in Vesicomyosocius okutanii subsp. Calyptogena okutanii (strain HA).